A 290-amino-acid polypeptide reads, in one-letter code: Tubulin beta-4B chain (290 aa).

Residues 1–4 (MREI) carry the MREI motif motif. Q11 contacts GTP. At T55 the chain carries Phosphothreonine. An N6-acetyllysine modification is found at K58. 6 residues coordinate GTP: E69, S138, G142, T143, G144, and N172. Position 69 (E69) interacts with Mg(2+).

It belongs to the tubulin family. As to quaternary structure, dimer of alpha and beta chains. A typical microtubule is a hollow water-filled tube with an outer diameter of 25 nm and an inner diameter of 15 nM. Alpha-beta heterodimers associate head-to-tail to form protofilaments running lengthwise along the microtubule wall with the beta-tubulin subunit facing the microtubule plus end conferring a structural polarity. Microtubules usually have 13 protofilaments but different protofilament numbers can be found in some organisms and specialized cells. Component of sperm flagellar doublet microtubules. It depends on Mg(2+) as a cofactor. In terms of processing, some glutamate residues at the C-terminus are polyglycylated, resulting in polyglycine chains on the gamma-carboxyl group. Glycylation is mainly limited to tubulin incorporated into axonemes (cilia and flagella) whereas glutamylation is prevalent in neuronal cells, centrioles, axonemes, and the mitotic spindle. Both modifications can coexist on the same protein on adjacent residues, and lowering polyglycylation levels increases polyglutamylation, and reciprocally. Cilia and flagella glycylation is required for their stability and maintenance. Flagella glycylation controls sperm motility. Post-translationally, some glutamate residues at the C-terminus are polyglutamylated, resulting in polyglutamate chains on the gamma-carboxyl group. Polyglutamylation plays a key role in microtubule severing by spastin (SPAST). SPAST preferentially recognizes and acts on microtubules decorated with short polyglutamate tails: severing activity by SPAST increases as the number of glutamates per tubulin rises from one to eight, but decreases beyond this glutamylation threshold. Glutamylation is also involved in cilia motility.

The protein resides in the cytoplasm. Its subcellular location is the cytoskeleton. It localises to the flagellum axoneme. In terms of biological role, tubulin is the major constituent of microtubules, a cylinder consisting of laterally associated linear protofilaments composed of alpha- and beta-tubulin heterodimers. Microtubules grow by the addition of GTP-tubulin dimers to the microtubule end, where a stabilizing cap forms. Below the cap, tubulin dimers are in GDP-bound state, owing to GTPase activity of alpha-tubulin. This chain is Tubulin beta-4B chain (TUBB4B), found in Mesocricetus auratus (Golden hamster).